The primary structure comprises 58 residues: Metallothionein-1 (58 aa).

The tract at residues 1–28 (PGPCCKDKCECAEGGCKTGCKCTSCRCA) is beta. A divalent metal cation contacts are provided by cysteine 4, cysteine 5, cysteine 9, cysteine 11, cysteine 16, cysteine 20, cysteine 22, cysteine 25, cysteine 27, cysteine 30, cysteine 33, cysteine 37, cysteine 39, cysteine 45, cysteine 49, cysteine 53, cysteine 55, and cysteine 56. An alpha region spans residues 29–58 (PCEKCTSGCKCPSKDECAKTCSKPCSCCXX).

Belongs to the metallothionein superfamily. Type 3 family.

Metallothioneins have a high content of cysteine residues that bind various heavy metals. The different forms of lobster metallothioneins may have different biological functions. Class I MTS in marine crustacea are involved in the sequestration of elevated levels of heavy-metal ions. Binds 6 metal ions. Known to bind cadmium. This is Metallothionein-1 from Homarus americanus (American lobster).